A 380-amino-acid chain; its full sequence is Lipid-A-disaccharide synthase (380 aa).

It belongs to the LpxB family.

It catalyses the reaction a lipid X + a UDP-2-N,3-O-bis[(3R)-3-hydroxyacyl]-alpha-D-glucosamine = a lipid A disaccharide + UDP + H(+). The protein operates within bacterial outer membrane biogenesis; LPS lipid A biosynthesis. Functionally, condensation of UDP-2,3-diacylglucosamine and 2,3-diacylglucosamine-1-phosphate to form lipid A disaccharide, a precursor of lipid A, a phosphorylated glycolipid that anchors the lipopolysaccharide to the outer membrane of the cell. The sequence is that of Lipid-A-disaccharide synthase from Vibrio vulnificus (strain CMCP6).